The chain runs to 309 residues: Putative S-adenosyl-L-methionine-dependent methyltransferase Mflv_0743 (309 aa).

Residues aspartate 134 and 163-164 (DL) each bind S-adenosyl-L-methionine.

It belongs to the UPF0677 family.

Functionally, exhibits S-adenosyl-L-methionine-dependent methyltransferase activity. The sequence is that of Putative S-adenosyl-L-methionine-dependent methyltransferase Mflv_0743 from Mycolicibacterium gilvum (strain PYR-GCK) (Mycobacterium gilvum (strain PYR-GCK)).